A 291-amino-acid chain; its full sequence is Mitochondrial fission factor (291 aa).

Over 1–271 (MAEISRIQYE…ENKERAKREM (271 aa)) the chain is Cytoplasmic. Position 89 is a phosphothreonine (T89). The interval 106 to 134 (LERPLPTPQSEESRAVGRLKRERSMSENA) is disordered. Phosphoserine is present on residues S129, S131, and S146. T149 bears the Phosphothreonine mark. 4 positions are modified to phosphoserine: S151, S178, S182, and S244. Positions 240–271 (VDAASLRRQIIKLNRRLQLLEEENKERAKREM) form a coiled coil. A helical; Anchor for type IV membrane protein transmembrane segment spans residues 272–289 (VMYSITVAFWLLNSWLWF). Topologically, residues 290–291 (RR) are mitochondrial intermembrane.

Belongs to the Tango11 family. In terms of assembly, homodimer. Interacts with DNM1L. Interacts with C11orf65/MFI; the interaction inhibits MFF interaction with DNM1L.

Its subcellular location is the mitochondrion outer membrane. It is found in the peroxisome. The protein localises to the cytoplasmic vesicle. It localises to the secretory vesicle. The protein resides in the synaptic vesicle. Its function is as follows. Plays a role in mitochondrial and peroxisomal fission. Promotes the recruitment and association of the fission mediator dynamin-related protein 1 (DNM1L) to the mitochondrial surface. May be involved in regulation of synaptic vesicle membrane dynamics by recruitment of DNM1L to clathrin-containing vesicles. This is Mitochondrial fission factor (Mff) from Mus musculus (Mouse).